Here is a 197-residue protein sequence, read N- to C-terminus: dITP/XTP pyrophosphatase (197 aa).

8–13 (TGNVGK) lines the substrate pocket. Positions 40 and 69 each coordinate Mg(2+). Residue Asp69 is the Proton acceptor of the active site. Substrate-binding positions include Ser70, 154–157 (FGYD), Lys177, and 182–183 (HR).

The protein belongs to the HAM1 NTPase family. Homodimer. Requires Mg(2+) as cofactor. It depends on Mn(2+) as a cofactor. The cofactor is Ni(2+).

The enzyme catalyses XTP + H2O = XMP + diphosphate + H(+). The catalysed reaction is dITP + H2O = dIMP + diphosphate + H(+). It catalyses the reaction ITP + H2O = IMP + diphosphate + H(+). In terms of biological role, pyrophosphatase that catalyzes the hydrolysis of nucleoside triphosphates to their monophosphate derivatives, with a high preference for the non-canonical purine nucleotides XTP (xanthosine triphosphate), dITP (deoxyinosine triphosphate) and ITP. Can also efficiently hydrolyze 2'-deoxy-N-6-hydroxylaminopurine triphosphate (dHAPTP). Seems to function as a house-cleaning enzyme that removes non-canonical purine nucleotides from the nucleotide pool, thus preventing their incorporation into DNA/RNA and avoiding chromosomal lesions. To a much lesser extent, is also able to hydrolyze GTP, dGTP and dUTP, but shows very low activity toward the canonical nucleotides dATP, dCTP and dTTP and toward 8-oxo-dGTP, purine deoxyribose triphosphate, 2-aminopurine deoxyribose triphosphate and 2,6-diaminopurine deoxyribose triphosphate. Genetic interactions among priB, dam, lexA, nagC, polA, rdgB, rdgB, rep and uup link the PriA-PriB replication restart pathway to DNA double-strand break repair. The polypeptide is dITP/XTP pyrophosphatase (Escherichia coli (strain K12)).